The chain runs to 464 residues: NADH dehydrogenase [ubiquinone] flavoprotein 1, mitochondrial (464 aa).

The transit peptide at 1–20 (MLAARRLLGGSLPSRVSVRF) directs the protein to the mitochondrion. Lys-81 bears the N6-acetyllysine; alternate mark. N6-succinyllysine; alternate is present on Lys-81. 87–96 (GRGGAGFPTG) lines the NADH pocket. An N6-acetyllysine modification is found at Lys-104. Residue 199–247 (RGAGAYICGEETALIESIEGKQGKPRLKPPFPADVGVFGCPTTVANVET) participates in FMN binding. At Arg-257 the chain carries Omega-N-methylarginine. The residue at position 375 (Lys-375) is an N6-acetyllysine. [4Fe-4S] cluster is bound by residues Cys-379, Cys-382, Cys-385, and Cys-425.

It belongs to the complex I 51 kDa subunit family. Core subunit of respiratory chain NADH dehydrogenase (Complex I) which is composed of 45 different subunits. This is a component of the flavoprotein-sulfur (FP) fragment of the enzyme. Interacts with RAB5IF. The cofactor is FMN. [4Fe-4S] cluster serves as cofactor.

It is found in the mitochondrion inner membrane. The catalysed reaction is a ubiquinone + NADH + 5 H(+)(in) = a ubiquinol + NAD(+) + 4 H(+)(out). In terms of biological role, core subunit of the mitochondrial membrane respiratory chain NADH dehydrogenase (Complex I) which catalyzes electron transfer from NADH through the respiratory chain, using ubiquinone as an electron acceptor. Part of the peripheral arm of the enzyme, where the electrons from NADH are accepted by flavin mononucleotide (FMN) and then passed along a chain of iron-sulfur clusters by electron tunnelling to the final acceptor ubiquinone. Contains FMN, which is the initial electron acceptor as well as one iron-sulfur cluster. This is NADH dehydrogenase [ubiquinone] flavoprotein 1, mitochondrial from Macaca fascicularis (Crab-eating macaque).